The primary structure comprises 594 residues: Transcription factor TFIIIB component B'' (594 aa).

Positions 1–169 (MSSIVNKSGT…ARRLSTISNK (169 aa)) are disordered. Ser49 is subject to Phosphoserine. A compositionally biased stretch (polar residues) spans 150 to 168 (LDSSSNSNGTARRLSTISN). Ser178 is subject to Phosphoserine. Disordered regions lie at residues 217 to 245 (SPPT…DENE) and 317 to 343 (ARQE…KEER). 2 stretches are compositionally biased toward basic and acidic residues: residues 225-241 (SLDR…SREA) and 317-330 (ARQE…LTKE). The SANT domain maps to 415-466 (SYTDPWTVEEMIKFYKALSMWGTDFNLISQLYPYRSRKQVKAKFVNEEKKRP). Residues 520-529 (KNTAKEEDQT) show a composition bias toward basic and acidic residues. Disordered stretches follow at residues 520-547 (KNTA…GGIM) and 567-594 (LKRK…EIDQ). Over residues 579–594 (DNEDNEGSEEEPEIDQ) the composition is skewed to acidic residues.

It belongs to the TFC5 family. In terms of assembly, TFIIIB comprises the TATA-binding protein (TBP), the B-related factor (BRF) and the B'' component (BDP1). Interacts with TFC4.

Its subcellular location is the nucleus. Its function is as follows. General activator of RNA polymerase III transcription. The chain is Transcription factor TFIIIB component B'' (BDP1) from Saccharomyces cerevisiae (strain ATCC 204508 / S288c) (Baker's yeast).